A 151-amino-acid polypeptide reads, in one-letter code: Putative pre-16S rRNA nuclease (151 aa).

It belongs to the YqgF nuclease family.

The protein localises to the cytoplasm. In terms of biological role, could be a nuclease involved in processing of the 5'-end of pre-16S rRNA. The protein is Putative pre-16S rRNA nuclease of Paraburkholderia phymatum (strain DSM 17167 / CIP 108236 / LMG 21445 / STM815) (Burkholderia phymatum).